The sequence spans 326 residues: Transmembrane protein 171 (326 aa).

4 consecutive transmembrane segments (helical) span residues 22-42 (IFFL…LSIF), 57-77 (MMLK…VILA), 114-134 (LIFG…GIWV), and 161-181 (FLSL…FFVV). Positions 229–326 (FPESSASAAA…LSPSSEPSPP (98 aa)) are disordered. Residues 230 to 240 (PESSASAAARS) show a composition bias toward low complexity. Residues 257–266 (SIFQSGSPTP) are compositionally biased toward polar residues. Low complexity-rich tracts occupy residues 288 to 302 (SSSE…LSEL) and 312 to 326 (ATTT…PSPP).

It localises to the membrane. The sequence is that of Transmembrane protein 171 (TMEM171) from Bos taurus (Bovine).